The primary structure comprises 303 residues: Pseudouridine-5'-phosphate glycosidase (303 aa).

The Proton donor role is filled by Glu-25. Substrate is bound by residues Lys-87 and Val-107. Residue Asp-139 participates in Mn(2+) binding. A substrate-binding site is contributed by Ser-141–Asp-143. Lys-160 functions as the Nucleophile in the catalytic mechanism.

Belongs to the pseudouridine-5'-phosphate glycosidase family. Homotrimer. Mn(2+) serves as cofactor.

The catalysed reaction is D-ribose 5-phosphate + uracil = psi-UMP + H2O. In terms of biological role, catalyzes the reversible cleavage of pseudouridine 5'-phosphate (PsiMP) to ribose 5-phosphate and uracil. Functions biologically in the cleavage direction, as part of a pseudouridine degradation pathway. The protein is Pseudouridine-5'-phosphate glycosidase of Hahella chejuensis (strain KCTC 2396).